The primary structure comprises 96 residues: uncharacterized protein (96 aa).

The protein belongs to the NifU family.

This is an uncharacterized protein from Azotobacter vinelandii.